A 212-amino-acid chain; its full sequence is Probable GH family 25 lysozyme 2 (212 aa).

Positions 1 to 19 (MRFIALLISFFALLKVISA) are cleaved as a signal peptide. The Ch-type lysozyme domain maps to 20–212 (ISGVDISSAS…GLGFDLNWYP (193 aa)). Active-site residues include Asp-24, Asp-112, and Glu-114.

It belongs to the glycosyl hydrolase 25 family.

The protein resides in the secreted. The catalysed reaction is Hydrolysis of (1-&gt;4)-beta-linkages between N-acetylmuramic acid and N-acetyl-D-glucosamine residues in a peptidoglycan and between N-acetyl-D-glucosamine residues in chitodextrins.. In Dictyostelium discoideum (Social amoeba), this protein is Probable GH family 25 lysozyme 2.